A 349-amino-acid polypeptide reads, in one-letter code: Quinolinate synthase (349 aa).

2 residues coordinate iminosuccinate: H52 and S69. C114 is a binding site for [4Fe-4S] cluster. Iminosuccinate contacts are provided by residues 140–142 and S157; that span reads YFN. C201 serves as a coordination point for [4Fe-4S] cluster. Iminosuccinate-binding positions include 227–229 and T255; that span reads HPE. C300 contacts [4Fe-4S] cluster.

It belongs to the quinolinate synthase family. Type 2 subfamily. [4Fe-4S] cluster is required as a cofactor.

It is found in the cytoplasm. It catalyses the reaction iminosuccinate + dihydroxyacetone phosphate = quinolinate + phosphate + 2 H2O + H(+). The protein operates within cofactor biosynthesis; NAD(+) biosynthesis; quinolinate from iminoaspartate: step 1/1. Catalyzes the condensation of iminoaspartate with dihydroxyacetone phosphate to form quinolinate. The sequence is that of Quinolinate synthase from Mycolicibacterium paratuberculosis (strain ATCC BAA-968 / K-10) (Mycobacterium paratuberculosis).